A 446-amino-acid polypeptide reads, in one-letter code: Trigger factor (446 aa).

The 86-residue stretch at 163-248 (GDRLVIDFEG…VKEIKKKNLL (86 aa)) folds into the PPIase FKBP-type domain.

This sequence belongs to the FKBP-type PPIase family. Tig subfamily.

It localises to the cytoplasm. It catalyses the reaction [protein]-peptidylproline (omega=180) = [protein]-peptidylproline (omega=0). Functionally, involved in protein export. Acts as a chaperone by maintaining the newly synthesized protein in an open conformation. Functions as a peptidyl-prolyl cis-trans isomerase. The protein is Trigger factor of Natranaerobius thermophilus (strain ATCC BAA-1301 / DSM 18059 / JW/NM-WN-LF).